We begin with the raw amino-acid sequence, 137 residues long: MLQPKRTKFRKQFKGRIHGASKGGTDLNFGAYGLKVVEPERITARQIEAARRAITRYMKRSGRVWIRVFPDLPVTSKPTEVRMGKGKGSVDYWAARVAPGRIMFELDGVPEDVAREALRLGAAKLPIKTRFIQRIVE.

Belongs to the universal ribosomal protein uL16 family. Part of the 50S ribosomal subunit.

Its function is as follows. Binds 23S rRNA and is also seen to make contacts with the A and possibly P site tRNAs. The sequence is that of Large ribosomal subunit protein uL16 from Bartonella bacilliformis (strain ATCC 35685 / KC583 / Herrer 020/F12,63).